A 330-amino-acid chain; its full sequence is Methionyl-tRNA formyltransferase (330 aa).

121–124 provides a ligand contact to (6S)-5,6,7,8-tetrahydrofolate; that stretch reads SLLP.

It belongs to the Fmt family.

The enzyme catalyses L-methionyl-tRNA(fMet) + (6R)-10-formyltetrahydrofolate = N-formyl-L-methionyl-tRNA(fMet) + (6S)-5,6,7,8-tetrahydrofolate + H(+). Functionally, attaches a formyl group to the free amino group of methionyl-tRNA(fMet). The formyl group appears to play a dual role in the initiator identity of N-formylmethionyl-tRNA by promoting its recognition by IF2 and preventing the misappropriation of this tRNA by the elongation apparatus. In Burkholderia cenocepacia (strain HI2424), this protein is Methionyl-tRNA formyltransferase.